The following is a 135-amino-acid chain: NAD(P)H-quinone oxidoreductase subunit 3 (135 aa).

Transmembrane regions (helical) follow at residues 15–35, 79–99, and 104–124; these read IVFF…SSLV, MFAL…PWAV, and LGLL…VALV.

Belongs to the complex I subunit 3 family. As to quaternary structure, NDH-1 can be composed of about 15 different subunits; different subcomplexes with different compositions have been identified which probably have different functions.

It is found in the cellular thylakoid membrane. The catalysed reaction is a plastoquinone + NADH + (n+1) H(+)(in) = a plastoquinol + NAD(+) + n H(+)(out). It catalyses the reaction a plastoquinone + NADPH + (n+1) H(+)(in) = a plastoquinol + NADP(+) + n H(+)(out). In terms of biological role, NDH-1 shuttles electrons from an unknown electron donor, via FMN and iron-sulfur (Fe-S) centers, to quinones in the respiratory and/or the photosynthetic chain. The immediate electron acceptor for the enzyme in this species is believed to be plastoquinone. Couples the redox reaction to proton translocation, and thus conserves the redox energy in a proton gradient. Cyanobacterial NDH-1 also plays a role in inorganic carbon-concentration. The polypeptide is NAD(P)H-quinone oxidoreductase subunit 3 (Trichodesmium erythraeum (strain IMS101)).